The chain runs to 110 residues: Insulin (110 aa).

The first 24 residues, 1-24 (MALWMHLLTVLALLALWGPNTGQA), serve as a signal peptide directing secretion. 3 cysteine pairs are disulfide-bonded: Cys31-Cys96, Cys43-Cys109, and Cys95-Cys100. Positions 57–87 (ELEDPQVEQTELGMGLGAGGLQPLALEMALQ) are cleaved as a propeptide — c peptide.

This sequence belongs to the insulin family. As to quaternary structure, heterodimer of a B chain and an A chain linked by two disulfide bonds.

The protein resides in the secreted. In terms of biological role, insulin decreases blood glucose concentration. It increases cell permeability to monosaccharides, amino acids and fatty acids. It accelerates glycolysis, the pentose phosphate cycle, and glycogen synthesis in liver. The chain is Insulin (INS) from Cavia porcellus (Guinea pig).